Consider the following 487-residue polypeptide: UDP-glucosyl transferase 73CC6 (487 aa).

His17 functions as the Proton acceptor in the catalytic mechanism. The active-site Charge relay is Asp114. Residues Ser282, Trp346, Ala347, His364, Asn368, Ser369, Glu372, and Tyr386 each contribute to the UDP site.

This sequence belongs to the UDP-glycosyltransferase family. Mainly expressed in flowers and flower buds and, to a lesser extent, in leaves, stems and roots.

It functions in the pathway secondary metabolite biosynthesis; terpenoid biosynthesis. In terms of biological role, component of the oleanane-type triterpene saponins (e.g. saponarioside A and saponarioside B) biosynthetic pathway, leading to the production of natural products with detergent properties used as traditional sources of soap. A glycosyltransferase that mediates the conversion of QA-di to QA-tri via the elongation of the C-3 sugar chain with a D-xylose. The chain is UDP-glucosyl transferase 73CC6 from Saponaria officinalis (Common soapwort).